The following is a 276-amino-acid chain: Large ribosomal subunit protein uL2 (276 aa).

2 disordered regions span residues 14–58 and 219–276; these read RNAS…GGGH and PITR…KNRK. Polar residues predominate over residues 16 to 27; sequence ASVSDFSELTRS. Basic residues predominate over residues 255-276; that stretch reads RRPKKASNKMIVRRRPSGKNRK.

It belongs to the universal ribosomal protein uL2 family. Part of the 50S ribosomal subunit. Forms a bridge to the 30S subunit in the 70S ribosome.

One of the primary rRNA binding proteins. Required for association of the 30S and 50S subunits to form the 70S ribosome, for tRNA binding and peptide bond formation. It has been suggested to have peptidyltransferase activity; this is somewhat controversial. Makes several contacts with the 16S rRNA in the 70S ribosome. The sequence is that of Large ribosomal subunit protein uL2 from Bifidobacterium longum (strain DJO10A).